A 196-amino-acid chain; its full sequence is MLSSLSPYMANPRQTFTQVLNFALVLSTAFMLWKGLSVYTNSASPIVVVLSGSMEPAFQRGDLLFLWNRSPRVDVGEIVVYNVRGKDIPIVHRVMRTFPDVPGKDKTKKGGKQGVEASPSSLESQKLLTKGDNNLSDDTELYARGQDYLDRKEDIVGSVRGYIPAVGYVTIMLSEHPWLKSVLLGFMGLMVILQRE.

Residues 1-14 (MLSSLSPYMANPRQ) lie on the Cytoplasmic side of the membrane. The helical; Signal-anchor for type II membrane protein transmembrane segment at 15–33 (TFTQVLNFALVLSTAFMLW) threads the bilayer. Residues 34 to 196 (KGLSVYTNSA…MGLMVILQRE (163 aa)) lie on the Lumenal side of the membrane. Active-site charge relay system residues include S53 and H92. The tract at residues 101 to 133 (VPGKDKTKKGGKQGVEASPSSLESQKLLTKGDN) is disordered. Residues 118–133 (SPSSLESQKLLTKGDN) show a composition bias toward polar residues. Residue N134 is glycosylated (N-linked (GlcNAc...) asparagine). D138 acts as the Charge relay system in catalysis. The interval 182–193 (VLLGFMGLMVIL) is C-terminal short (CTS) helix.

Belongs to the peptidase S26B family. Component of the signal peptidase complex (SPC) composed of a catalytic subunit SEC11 and three accessory subunits SPC1, SPC2 and SPC3. The complex induces a local thinning of the ER membrane which is used to measure the length of the signal peptide (SP) h-region of protein substrates. This ensures the selectivity of the complex towards h-regions shorter than 18-20 amino acids. SPC associates with the translocon complex.

It is found in the endoplasmic reticulum membrane. The enzyme catalyses Cleavage of hydrophobic, N-terminal signal or leader sequences from secreted and periplasmic proteins.. Catalytic component of the signal peptidase complex (SPC) which catalyzes the cleavage of N-terminal signal sequences from nascent proteins as they are translocated into the lumen of the endoplasmic reticulum. Specifically cleaves N-terminal signal peptides that contain a hydrophobic alpha-helix (h-region) shorter than 18-20 amino acids. The protein is Signal peptidase complex catalytic subunit SEC11 (SEC11) of Ajellomyces dermatitidis (strain ER-3 / ATCC MYA-2586) (Blastomyces dermatitidis).